A 101-amino-acid chain; its full sequence is MGARHLLALLLVLLVLGFEVQGAQVPQQDEAANTTLLTQVQESLLSYWDSTKAAAQDLYKKTYLTTMDEKIRDMFSKSTAAVSTYVGIFTDQLLSLLKGED.

Residues 1–22 form the signal peptide; the sequence is MGARHLLALLLVLLVLGFEVQG. Residues 66–74 form a lipid binding region; sequence TMDEKIRDM. The tract at residues 78-101 is lipoprotein lipase cofactor; sequence STAAVSTYVGIFTDQLLSLLKGED.

It belongs to the apolipoprotein C2 family. In terms of processing, proapolipoprotein C-II is synthesized as a sialic acid containing glycoprotein which is subsequently desialylated prior to its proteolytic processing. Proapolipoprotein C-II, the major form found in plasma undergoes proteolytic cleavage of its N-terminal hexapeptide to generate apolipoprotein C-II, which occurs as the minor form in plasma.

The protein resides in the secreted. Component of chylomicrons, very low-density lipoproteins (VLDL), low-density lipoproteins (LDL), and high-density lipoproteins (HDL) in plasma. Plays an important role in lipoprotein metabolism as an activator of lipoprotein lipase. Both proapolipoprotein C-II and apolipoprotein C-II can activate lipoprotein lipase. The polypeptide is Apolipoprotein C-II (APOC2) (Tapirus terrestris (Lowland tapir)).